Here is a 185-residue protein sequence, read N- to C-terminus: Ribosome-recycling factor (185 aa).

This sequence belongs to the RRF family.

It is found in the cytoplasm. In terms of biological role, responsible for the release of ribosomes from messenger RNA at the termination of protein biosynthesis. May increase the efficiency of translation by recycling ribosomes from one round of translation to another. This Exiguobacterium sibiricum (strain DSM 17290 / CCUG 55495 / CIP 109462 / JCM 13490 / 255-15) protein is Ribosome-recycling factor.